The sequence spans 280 residues: UDP-2,3-diacylglucosamine pyrophosphatase LpxI (280 aa).

Residues Ala12, Asn74–Val75, Gln169, Thr187–Asp188, Lys214, and Leu226–Thr233 each bind substrate.

The protein belongs to the LpxI family. As to quaternary structure, homodimer. Mg(2+) serves as cofactor.

The protein resides in the cell inner membrane. The enzyme catalyses UDP-2-N,3-O-bis[(3R)-3-hydroxytetradecanoyl]-alpha-D-glucosamine + H2O = 2-N,3-O-bis[(3R)-3-hydroxytetradecanoyl]-alpha-D-glucosaminyl 1-phosphate + UMP + 2 H(+). The protein operates within glycolipid biosynthesis; lipid IV(A) biosynthesis; lipid IV(A) from (3R)-3-hydroxytetradecanoyl-[acyl-carrier-protein] and UDP-N-acetyl-alpha-D-glucosamine: step 4/6. With respect to regulation, inhibited by high concentrations of Cu(2+) and Zn(2+). Completely inhibited by EDTA in vitro. Its function is as follows. Hydrolyzes the pyrophosphate bond of UDP-2,3-diacylglucosamine to form 2,3-diacylglucosamine 1-phosphate (lipid X) and UMP by catalyzing the attack of water at the beta-P atom. Involved in the biosynthesis of lipid A, a phosphorylated glycolipid that anchors the lipopolysaccharide to the outer membrane of the cell. Can functionally complement lpxH deficiency in E.coli. Cannot use CDP-diacylglycerol as substrate. The polypeptide is UDP-2,3-diacylglucosamine pyrophosphatase LpxI (Caulobacter vibrioides (strain ATCC 19089 / CIP 103742 / CB 15) (Caulobacter crescentus)).